The primary structure comprises 183 residues: Capsid protein (183 aa).

A disordered region spans residues 143–183 (LPETTVIRRRGRSPRRRTPSPRRRRSQSPRRRRSQSREPQC). Positions 149-176 (IRRRGRSPRRRTPSPRRRRSQSPRRRRS) are enriched in basic residues. Phosphoserine; by host is present on residues Ser155, Ser162, and Ser170. Residues 155 to 161 (SPRRRTP) form a 1; half-length repeat. Residues 155 to 177 (SPRRRTPSPRRRRSQSPRRRRSQ) form a 3 X 8 AA repeats of S-P-R-R-R-[PR]-S-Q region. A Bipartite nuclear localization signal motif is present at residues 158 to 175 (RRTPSPRRRRSQSPRRRR). Tandem repeats lie at residues 162 to 169 (SPRRRRSQ) and 170 to 177 (SPRRRRSQ). Residues 177–183 (QSREPQC) are RNA binding.

It belongs to the orthohepadnavirus core antigen family. In terms of assembly, homodimerizes, then multimerizes. Interacts with cytosol exposed regions of viral L glycoprotein present in the reticulum-to-Golgi compartment. Interacts with human FLNB. Phosphorylated form interacts with host importin alpha; this interaction depends on the exposure of the NLS, which itself depends upon genome maturation and/or phosphorylation of the capsid protein. Interacts with host NUP153. Phosphorylated by host SRPK1, SRPK2, and maybe protein kinase C or GAPDH. Phosphorylation is critical for pregenomic RNA packaging. Protein kinase C phosphorylation is stimulated by HBx protein and may play a role in transport of the viral genome to the nucleus at the late step during the viral replication cycle.

The protein resides in the virion. It localises to the host cytoplasm. In terms of biological role, self assembles to form an icosahedral capsid. Most capsids appear to be large particles with an icosahedral symmetry of T=4 and consist of 240 copies of capsid protein, though a fraction forms smaller T=3 particles consisting of 180 capsid proteins. Entering capsids are transported along microtubules to the nucleus. Phosphorylation of the capsid is thought to induce exposure of nuclear localization signal in the C-terminal portion of the capsid protein that allows binding to the nuclear pore complex via the importin (karyopherin-) alpha and beta. Capsids are imported in intact form through the nuclear pore into the nuclear basket, where it probably binds NUP153. Only capsids that contain the mature viral genome can release the viral DNA and capsid protein into the nucleoplasm. Immature capsids get stuck in the basket. Capsids encapsulate the pre-genomic RNA and the P protein. Pre-genomic RNA is reverse-transcribed into DNA while the capsid is still in the cytoplasm. The capsid can then either be directed to the nucleus, providing more genomes for transcription, or bud through the endoplasmic reticulum to provide new virions. The sequence is that of Capsid protein from Hepatitis B virus genotype B1 (isolate Japan/Ry30/2002) (HBV-B).